The sequence spans 216 residues: Ribonuclease HII (216 aa).

An RNase H type-2 domain is found at 28 to 216 (ACIAGIDEAG…GVKEYVRSEE (189 aa)). A divalent metal cation is bound by residues Asp-34, Glu-35, and Asp-126.

The protein belongs to the RNase HII family. The cofactor is Mn(2+). Requires Mg(2+) as cofactor.

It is found in the cytoplasm. It catalyses the reaction Endonucleolytic cleavage to 5'-phosphomonoester.. Its function is as follows. Endonuclease that specifically degrades the RNA of RNA-DNA hybrids. In Geotalea uraniireducens (strain Rf4) (Geobacter uraniireducens), this protein is Ribonuclease HII.